A 263-amino-acid chain; its full sequence is Tryptophan synthase alpha chain (263 aa).

Residues Glu-47 and Asp-58 each act as proton acceptor in the active site.

Belongs to the TrpA family. In terms of assembly, tetramer of two alpha and two beta chains.

It localises to the plastid. Its subcellular location is the chloroplast. The enzyme catalyses (1S,2R)-1-C-(indol-3-yl)glycerol 3-phosphate + L-serine = D-glyceraldehyde 3-phosphate + L-tryptophan + H2O. It participates in amino-acid biosynthesis; L-tryptophan biosynthesis; L-tryptophan from chorismate: step 5/5. In terms of biological role, the alpha subunit is responsible for the aldol cleavage of indoleglycerol phosphate to indole and glyceraldehyde 3-phosphate. This is Tryptophan synthase alpha chain from Pyropia yezoensis (Susabi-nori).